The primary structure comprises 507 residues: DNA replication licensing factor MCM6 (507 aa).

The 208-residue stretch at 32 to 239 (LYHNLCTSLF…TDYAIARRIV (208 aa)) folds into the MCM domain. ATP contacts are provided by H45, S85, T86, A87, K88, S89, and N190. Positions 214 to 217 (SRFD) match the Arginine finger motif. Residues R305 and E308 each coordinate ADP. K329 is subject to N6-acetyllysine. Residues 365-392 (GPGGINGHADSPAPVNGFNGSGEDASQE) form a disordered region. Phosphoserine occurs at positions 375, 390, and 448. The residue at position 477 (T477) is a Phosphothreonine.

Belongs to the MCM family. As to quaternary structure, component of the MCM2-7 complex. The complex forms a toroidal hexameric ring with the proposed subunit order MCM2-MCM6-MCM4-MCM7-MCM3-MCM5. Component of the CMG helicase complex, a hexameric ring of related MCM2-7 subunits stabilized by CDC45 and the tetrameric GINS complex. May interact with MCM10. Interacts with TIPIN. Interacts with CDT1. Interacts with MCMBP. Interacts with DDI2. Post-translationally, O-glycosylated (O-GlcNAcylated), in a cell cycle-dependent manner.

The protein localises to the nucleus. It is found in the chromosome. It carries out the reaction ATP + H2O = ADP + phosphate + H(+). Functionally, acts as a component of the MCM2-7 complex (MCM complex) which is the replicative helicase essential for 'once per cell cycle' DNA replication initiation and elongation in eukaryotic cells. Core component of CDC45-MCM-GINS (CMG) helicase, the molecular machine that unwinds template DNA during replication, and around which the replisome is built. The active ATPase sites in the MCM2-7 ring are formed through the interaction surfaces of two neighboring subunits such that a critical structure of a conserved arginine finger motif is provided in trans relative to the ATP-binding site of the Walker A box of the adjacent subunit. The six ATPase active sites, however, are likely to contribute differentially to the complex helicase activity. The protein is DNA replication licensing factor MCM6 (Mcm6) of Rattus norvegicus (Rat).